Here is a 579-residue protein sequence, read N- to C-terminus: Fatty-acid amide hydrolase 1 (579 aa).

The chain crosses the membrane as a helical span at residues 9-29 (ALPGASGVALACCFVAAAVAL). At 30–403 (RWSGRRTARG…GDFVDPCLGD (374 aa)) the chain is on the cytoplasmic side. Residue Lys142 is the Charge relay system of the active site. Substrate contacts are provided by residues Met191, Ser217, and 238-241 (IGGS). Ser217 acts as the Charge relay system in catalysis. Catalysis depends on Ser241, which acts as the Acyl-ester intermediate. The residue at position 241 (Ser241) is a Phosphoserine. Residues 404-433 (LVSILKLPQWLKGLLAFLVKPLLPRLSAFL) lie within the membrane without spanning it. Residues 434–579 (SNMKSRSAGK…RLMTPEKQSS (146 aa)) are Cytoplasmic-facing.

The protein belongs to the amidase family. As to quaternary structure, homodimer. As to expression, highly expressed in the brain, small intestine, pancreas, skeletal muscle and testis. Also expressed in the kidney, liver, lung, placenta and prostate.

The protein resides in the endomembrane system. It is found in the cytoplasm. It localises to the cytoskeleton. It catalyses the reaction N-(5Z,8Z,11Z,14Z-eicosatetraenoyl)-ethanolamine + H2O = ethanolamine + (5Z,8Z,11Z,14Z)-eicosatetraenoate. The enzyme catalyses (9Z)-octadecenamide + H2O = (9Z)-octadecenoate + NH4(+). It carries out the reaction 2-(5Z,8Z,11Z,14Z-eicosatetraenoyl)-glycerol + H2O = glycerol + (5Z,8Z,11Z,14Z)-eicosatetraenoate + H(+). The catalysed reaction is N-(9Z-octadecenoyl) ethanolamine + H2O = ethanolamine + (9Z)-octadecenoate. It catalyses the reaction N-hexadecanoylethanolamine + H2O = ethanolamine + hexadecanoate. The enzyme catalyses hexadecanamide + H2O = hexadecanoate + NH4(+). It carries out the reaction tetradecamide + H2O = tetradecanoate + NH4(+). The catalysed reaction is N-(9Z-octadecenoyl)-taurine + H2O = taurine + (9Z)-octadecenoate. It catalyses the reaction (9Z,12Z,15Z)-octadecatrienamide + H2O = (9Z,12Z,15Z)-octadecatrienoate + NH4(+). The enzyme catalyses (5Z,8Z,11Z,14Z)-eicosatetraenamide + H2O = (5Z,8Z,11Z,14Z)-eicosatetraenoate + NH4(+). It carries out the reaction (6Z)-octadecenamide + H2O = (6Z)-octadecenoate + NH4(+). The catalysed reaction is (15Z)-tetracosenamide + H2O = (15Z)-tetracosenoate + NH4(+). It catalyses the reaction (8Z,11Z,14Z)-eicosatrienamide + H2O = (8Z,11Z,14Z)-eicosatrienoate + NH4(+). The enzyme catalyses (11Z,14Z,17Z)-eicosatrienamide + H2O = (11Z,14Z,17Z)-eicosatrienoate + NH4(+). It carries out the reaction (11Z,14Z)-eicosadienamide + H2O = (11Z,14Z)-eicosadienoate + NH4(+). The catalysed reaction is (9Z,12Z)-octadecadienamide + H2O = (9Z,12Z)-octadecadienoate + NH4(+). It catalyses the reaction 1-O-methyl-(5Z,8Z,11Z,14Z)-eicosatetraenoate + H2O = methanol + (5Z,8Z,11Z,14Z)-eicosatetraenoate + H(+). The enzyme catalyses (11Z)-eicosenamide + H2O = (11Z)-eicosenoate + NH4(+). It carries out the reaction N-(9Z-hexadecenoyl) ethanolamine + H2O = (9Z)-hexadecenoate + ethanolamine. The catalysed reaction is N-octadecanoyl ethanolamine + H2O = octadecanoate + ethanolamine. It catalyses the reaction N-docosanoyl-ethanolamine + H2O = docosanoate + ethanolamine. The enzyme catalyses N-tetracosanoyl-taurine + H2O = tetracosanoate + taurine. It carries out the reaction N-(15Z-tetracosenoyl)-ethanolamine + H2O = (15Z)-tetracosenoate + ethanolamine. The catalysed reaction is N-docosanoyl-taurine + H2O = docosanoate + taurine. It catalyses the reaction N-(15Z-tetracosenoyl)-taurine + H2O = (15Z)-tetracosenoate + taurine. The enzyme catalyses N-tricosanoyl-taurine + H2O = tricosanoate + taurine. It carries out the reaction (9Z)-octadecenoate + glycine = N-(9Z-octadecenoyl)glycine + H2O. The catalysed reaction is N-(5Z,8Z,11Z,14Z)-eicosatetraenoyl-glycine + H2O = (5Z,8Z,11Z,14Z)-eicosatetraenoate + glycine. It catalyses the reaction N-(5Z,8Z,11Z,14Z-eicosatetraenoyl)-L-serine + H2O = (5Z,8Z,11Z,14Z)-eicosatetraenoate + L-serine. With respect to regulation, inhibited by O-aryl carbamates and alpha-keto heterocycles. Inhibited by trifluoromethyl ketone. Functionally, catalyzes the hydrolysis of endogenous amidated lipids like the sleep-inducing lipid oleamide ((9Z)-octadecenamide), the endocannabinoid anandamide (N-(5Z,8Z,11Z,14Z-eicosatetraenoyl)-ethanolamine), as well as other fatty amides, to their corresponding fatty acids, thereby regulating the signaling functions of these molecules. Hydrolyzes polyunsaturated substrate anandamide preferentially as compared to monounsaturated substrates. It can also catalyze the hydrolysis of the endocannabinoid 2-arachidonoylglycerol (2-(5Z,8Z,11Z,14Z-eicosatetraenoyl)-glycerol). FAAH cooperates with PM20D1 in the hydrolysis of amino acid-conjugated fatty acids such as N-fatty acyl glycine and N-fatty acyl-L-serine, thereby acting as a physiological regulator of specific subsets of intracellular, but not of extracellular, N-fatty acyl amino acids. This Homo sapiens (Human) protein is Fatty-acid amide hydrolase 1 (FAAH).